The primary structure comprises 344 residues: S-methyl-5'-thioadenosine phosphorylase (344 aa).

Residues Thr-45, 88–89 (RH), and 121–122 (SA) each bind phosphate. Position 238 (Met-238) interacts with substrate. A phosphate-binding site is contributed by Ser-239. Position 262-264 (262-264 (DYD)) interacts with substrate.

This sequence belongs to the PNP/MTAP phosphorylase family. MTAP subfamily. As to quaternary structure, homotrimer.

The protein resides in the cytoplasm. Its subcellular location is the nucleus. The catalysed reaction is S-methyl-5'-thioadenosine + phosphate = 5-(methylsulfanyl)-alpha-D-ribose 1-phosphate + adenine. Its pathway is amino-acid biosynthesis; L-methionine biosynthesis via salvage pathway; S-methyl-5-thio-alpha-D-ribose 1-phosphate from S-methyl-5'-thioadenosine (phosphorylase route): step 1/1. In terms of biological role, catalyzes the reversible phosphorylation of S-methyl-5'-thioadenosine (MTA) to adenine and 5-methylthioribose-1-phosphate. Involved in the breakdown of MTA, a major by-product of polyamine biosynthesis. Responsible for the first step in the methionine salvage pathway after MTA has been generated from S-adenosylmethionine. Has broad substrate specificity with 6-aminopurine nucleosides as preferred substrates. This is S-methyl-5'-thioadenosine phosphorylase from Candida albicans (strain WO-1) (Yeast).